Consider the following 380-residue polypeptide: Cytochrome b (380 aa).

The next 4 helical transmembrane spans lie at 33-53 (FGSL…FLAM), 77-98 (WIIR…FLHV), 113-133 (WNIG…GYVL), and 178-198 (FFTL…LHLL). Residues His83 and His97 each coordinate heme b. 2 residues coordinate heme b: His182 and His196. His201 lines the a ubiquinone pocket. The next 4 helical transmembrane spans lie at 226-246 (TKDI…TLFS), 288-308 (LGGV…PILH), 320-340 (LSQL…WIGG), and 347-367 (FITI…ILMP).

The protein belongs to the cytochrome b family. In terms of assembly, the cytochrome bc1 complex contains 11 subunits: 3 respiratory subunits (MT-CYB, CYC1 and UQCRFS1), 2 core proteins (UQCRC1 and UQCRC2) and 6 low-molecular weight proteins (UQCRH/QCR6, UQCRB/QCR7, UQCRQ/QCR8, UQCR10/QCR9, UQCR11/QCR10 and a cleavage product of UQCRFS1). This cytochrome bc1 complex then forms a dimer. It depends on heme b as a cofactor.

It localises to the mitochondrion inner membrane. Component of the ubiquinol-cytochrome c reductase complex (complex III or cytochrome b-c1 complex) that is part of the mitochondrial respiratory chain. The b-c1 complex mediates electron transfer from ubiquinol to cytochrome c. Contributes to the generation of a proton gradient across the mitochondrial membrane that is then used for ATP synthesis. The polypeptide is Cytochrome b (MT-CYB) (Pan paniscus (Pygmy chimpanzee)).